The chain runs to 355 residues: UDP-N-acetylglucosamine--N-acetylmuramyl-(pentapeptide) pyrophosphoryl-undecaprenol N-acetylglucosamine transferase (355 aa).

UDP-N-acetyl-alpha-D-glucosamine-binding positions include 15–17, Asn-127, Arg-163, Ser-191, Ile-244, 263–268, and Gln-288; these read TGG and ALTVSE.

The protein belongs to the glycosyltransferase 28 family. MurG subfamily.

It localises to the cell inner membrane. It catalyses the reaction di-trans,octa-cis-undecaprenyl diphospho-N-acetyl-alpha-D-muramoyl-L-alanyl-D-glutamyl-meso-2,6-diaminopimeloyl-D-alanyl-D-alanine + UDP-N-acetyl-alpha-D-glucosamine = di-trans,octa-cis-undecaprenyl diphospho-[N-acetyl-alpha-D-glucosaminyl-(1-&gt;4)]-N-acetyl-alpha-D-muramoyl-L-alanyl-D-glutamyl-meso-2,6-diaminopimeloyl-D-alanyl-D-alanine + UDP + H(+). It participates in cell wall biogenesis; peptidoglycan biosynthesis. Functionally, cell wall formation. Catalyzes the transfer of a GlcNAc subunit on undecaprenyl-pyrophosphoryl-MurNAc-pentapeptide (lipid intermediate I) to form undecaprenyl-pyrophosphoryl-MurNAc-(pentapeptide)GlcNAc (lipid intermediate II). This Sodalis glossinidius (strain morsitans) protein is UDP-N-acetylglucosamine--N-acetylmuramyl-(pentapeptide) pyrophosphoryl-undecaprenol N-acetylglucosamine transferase.